Consider the following 930-residue polypeptide: Probable SapB synthase (930 aa).

In terms of domain architecture, Protein kinase spans 256–516 (YTVESALHFS…GSTRADETTR (261 aa)). ATP is bound by residues 262–270 (LHFSNGGGV) and lysine 285. Aspartate 395 functions as the Proton acceptor in the catalytic mechanism. A helical membrane pass occupies residues 447–467 (YALACLRIVLFLPLTSLLAVD). The span at 501 to 527 (GSTRVDGSTRADETTRADETTRLDVTT) shows a compositional bias: basic and acidic residues. Disordered stretches follow at residues 501–558 (GSTR…RDSM) and 911–930 (PFLP…HQEP). The segment covering 532–546 (APDAARRPAGPVAPV) has biased composition (low complexity). Basic and acidic residues predominate over residues 547 to 556 (RPDDWPRSRD).

The protein in the N-terminal section; belongs to the protein kinase superfamily.

It is found in the cell membrane. In terms of biological role, required for aerial hyphae formation. Probably involved in processing the precursor of SapB to its mature form. In Streptomyces coelicolor (strain ATCC BAA-471 / A3(2) / M145), this protein is Probable SapB synthase.